The primary structure comprises 2282 residues: Protein Ycf2 (2282 aa).

ATP is bound at residue 1635–1642; the sequence is GSIGTGRS.

It belongs to the Ycf2 family.

It is found in the plastid. The protein localises to the chloroplast stroma. Its function is as follows. Probable ATPase of unknown function. Its presence in a non-photosynthetic plant (Epifagus virginiana) and experiments in tobacco indicate that it has an essential function which is probably not related to photosynthesis. This is Protein Ycf2 from Populus alba (White poplar).